We begin with the raw amino-acid sequence, 186 residues long: Peptide deformylase (186 aa).

Positions 99 and 141 each coordinate Fe cation. Glu-142 is an active-site residue. His-145 is a binding site for Fe cation.

This sequence belongs to the polypeptide deformylase family. It depends on Fe(2+) as a cofactor.

It carries out the reaction N-terminal N-formyl-L-methionyl-[peptide] + H2O = N-terminal L-methionyl-[peptide] + formate. In terms of biological role, removes the formyl group from the N-terminal Met of newly synthesized proteins. Requires at least a dipeptide for an efficient rate of reaction. N-terminal L-methionine is a prerequisite for activity but the enzyme has broad specificity at other positions. This Chlamydia pneumoniae (Chlamydophila pneumoniae) protein is Peptide deformylase.